The chain runs to 1072 residues: Error-prone DNA polymerase (1072 aa).

It belongs to the DNA polymerase type-C family. DnaE2 subfamily.

The protein resides in the cytoplasm. The enzyme catalyses DNA(n) + a 2'-deoxyribonucleoside 5'-triphosphate = DNA(n+1) + diphosphate. DNA polymerase involved in damage-induced mutagenesis and translesion synthesis (TLS). It is not the major replicative DNA polymerase. The chain is Error-prone DNA polymerase from Burkholderia pseudomallei (strain K96243).